The chain runs to 298 residues: Nucleotide-binding protein Dred_3054 (298 aa).

ATP is bound at residue glycine 20–threonine 27. Aspartate 71–glycine 74 contacts GTP.

This sequence belongs to the RapZ-like family.

Displays ATPase and GTPase activities. The protein is Nucleotide-binding protein Dred_3054 of Desulforamulus reducens (strain ATCC BAA-1160 / DSM 100696 / MI-1) (Desulfotomaculum reducens).